Consider the following 346-residue polypeptide: Elongation factor Ts (346 aa).

The involved in Mg(2+) ion dislocation from EF-Tu stretch occupies residues 80–83 (TDFV).

It belongs to the EF-Ts family.

It localises to the cytoplasm. In terms of biological role, associates with the EF-Tu.GDP complex and induces the exchange of GDP to GTP. It remains bound to the aminoacyl-tRNA.EF-Tu.GTP complex up to the GTP hydrolysis stage on the ribosome. The sequence is that of Elongation factor Ts from Streptococcus pyogenes serotype M18 (strain MGAS8232).